Consider the following 405-residue polypeptide: Probable succinyl-diaminopimelate desuccinylase (405 aa).

H72 lines the Zn(2+) pocket. Residue D74 is part of the active site. D105 contributes to the Zn(2+) binding site. Residue E139 is the Proton acceptor of the active site. Positions 140, 165, and 377 each coordinate Zn(2+).

It belongs to the peptidase M20A family. The cofactor is Zn(2+). Co(2+) is required as a cofactor.

It catalyses the reaction N-succinyl-(2S,6S)-2,6-diaminopimelate + H2O = (2S,6S)-2,6-diaminopimelate + succinate. The protein operates within amino-acid biosynthesis; L-lysine biosynthesis via DAP pathway; LL-2,6-diaminopimelate from (S)-tetrahydrodipicolinate (succinylase route): step 3/3. This chain is Probable succinyl-diaminopimelate desuccinylase (dapE), found in Staphylococcus epidermidis (strain ATCC 12228 / FDA PCI 1200).